Reading from the N-terminus, the 236-residue chain is Small ribosomal subunit protein eS6 (236 aa).

Residues serine 232 and serine 233 each carry the phosphoserine modification.

The protein belongs to the eukaryotic ribosomal protein eS6 family. Post-translationally, phosphorylated.

The polypeptide is Small ribosomal subunit protein eS6 (RPS6) (Debaryomyces hansenii (strain ATCC 36239 / CBS 767 / BCRC 21394 / JCM 1990 / NBRC 0083 / IGC 2968) (Yeast)).